Consider the following 436-residue polypeptide: Proteasome-activating nucleotidase (436 aa).

Residues 7 to 98 adopt a coiled-coil conformation; the sequence is KDVRDLCEKF…LRSDLQRMKK (92 aa). ATP is bound by residues 223–228 and H362; that span reads GTGKTL. Residues 434–436 are docks into pockets in the proteasome alpha-ring to cause gate opening; sequence AYH.

The protein belongs to the AAA ATPase family. Homohexamer. The hexameric complex has a two-ring architecture resembling a top hat that caps the 20S proteasome core at one or both ends. Upon ATP-binding, the C-terminus of PAN interacts with the alpha-rings of the proteasome core by binding to the intersubunit pockets.

It is found in the cytoplasm. ATPase which is responsible for recognizing, binding, unfolding and translocation of substrate proteins into the archaeal 20S proteasome core particle. Is essential for opening the gate of the 20S proteasome via an interaction with its C-terminus, thereby allowing substrate entry and access to the site of proteolysis. Thus, the C-termini of the proteasomal ATPase function like a 'key in a lock' to induce gate opening and therefore regulate proteolysis. Unfolding activity requires energy from ATP hydrolysis, whereas ATP binding alone promotes ATPase-20S proteasome association which triggers gate opening, and supports translocation of unfolded substrates. This chain is Proteasome-activating nucleotidase, found in Methanopyrus kandleri (strain AV19 / DSM 6324 / JCM 9639 / NBRC 100938).